Consider the following 616-residue polypeptide: Protein RIK (616 aa).

Residues 1–11 (MTEDRAHKVAD) are compositionally biased toward basic and acidic residues. A disordered region spans residues 1 to 32 (MTEDRAHKVADEPAASGRQSPERKKRKWDQPA). One can recognise a KH domain in the interval 198–304 (GTTSESISVP…AKVLAENLLD (107 aa)). Polar residues-rich tracts occupy residues 432–449 (TQAV…TKGN), 475–484 (TESQNSQQGS), and 491–502 (LDSSGNIGSSSI). Disordered regions lie at residues 432–455 (TQAV…LDAE) and 467–616 (LPVS…HTCV). Positions 534 to 564 (LPPPLKSMLPLPPRSMPPPPPKSMPPPPPKF) are enriched in pro residues. Composition is skewed to basic and acidic residues over residues 565–575 (PSDEFLSRNEN) and 598–610 (SERR…EEKN).

Interacts with RS2. In terms of tissue distribution, expressed in vegetative tissues. More abundant in apices and young leaf primordia than in fully expanded leaf tissues.

Its subcellular location is the nucleus. This chain is Protein RIK, found in Zea mays (Maize).